A 509-amino-acid polypeptide reads, in one-letter code: MAAIGVHLGCTSACVAVYKDGRADVVANDAGDRVTPAVVAYSEREQVVGLAAKQSRIRNISSTVVKVKQILGRSTADPQAQKYISESKCLVIEKNGKLQYEIDTGEETKLVSPEDVARLIFSKMKETAHSVLGSDANDVVVTVPFDFGEKQKSALGEAAGAAGFNVLRLIHEPSAALLAYGIGQDCPTGKSNVLVFKLGGTSLSLSIMEVNSGMYRVLSTNTSDNIGGVHFTDSLAQYLASEFQRLFKHDVRGSARAMMKLMNSAEVAKHSLSTLGSANCFVDSLYEGQDFDCNVSRARFELLCSPLFNKCIEAVRALLQQSGFTADDINKVVLCGGSSRIPRLQQLIKDLFPAGDLLNSIPPDEVIPIGAAIEAGILVGKESTSGDDSVLIECSARDILVKGVDESGANRFTVLFPSGTPLPARRQHTLQAPGSISSVCLELYESEGKNSVKEETKFAQVVLQDLDKKENGLRDILAVLTMKRDGSLQVTCTDQETGKCEAITVEVAS.

It belongs to the heat shock protein 70 family. As to quaternary structure, component of ribosome-associated complex (RAC), a heterodimer composed of Hsp70/DnaK-type chaperone HSPA14 and Hsp40/DnaJ-type chaperone DNAJC2.

It is found in the cytoplasm. The protein localises to the cytosol. In terms of biological role, component of the ribosome-associated complex (RAC), a complex involved in folding or maintaining nascent polypeptides in a folding-competent state. In the RAC complex, binds to the nascent polypeptide chain, while DNAJC2 stimulates its ATPase activity. This chain is Heat shock 70 kDa protein 14 (Hspa14), found in Rattus norvegicus (Rat).